Reading from the N-terminus, the 102-residue chain is Ferredoxin-thioredoxin reductase, catalytic chain (102 aa).

A [4Fe-4S] cluster-binding site is contributed by cysteine 53. Cysteine 55 (nucleophile) is an active-site residue. The cysteines at positions 55 and 85 are disulfide-linked. [4Fe-4S] cluster is bound by residues cysteine 72, cysteine 74, and cysteine 83.

This sequence belongs to the ferredoxin thioredoxin reductase beta subunit family. Heterodimer of subunit A (variable subunit) and subunit B (catalytic subunit). Heterodimeric FTR forms a complex with ferredoxin and thioredoxin. [4Fe-4S] cluster is required as a cofactor.

The protein resides in the plastid. It localises to the chloroplast. The catalysed reaction is [thioredoxin]-disulfide + 2 reduced [2Fe-2S]-[ferredoxin] + 2 H(+) = [thioredoxin]-dithiol + 2 oxidized [2Fe-2S]-[ferredoxin]. Catalytic subunit of the ferredoxin-thioredoxin reductase (FTR), which catalyzes the two-electron reduction of thioredoxins by the electrons provided by reduced ferredoxin. This chain is Ferredoxin-thioredoxin reductase, catalytic chain (ftrB), found in Guillardia theta (Cryptophyte).